Reading from the N-terminus, the 212-residue chain is ATP-dependent dethiobiotin synthetase BioD (212 aa).

Position 13–18 (13–18) interacts with ATP; the sequence is GIGKTV. Mg(2+) is bound at residue threonine 17. Residue lysine 33 is part of the active site. A substrate-binding site is contributed by serine 37. Glutamate 100 contacts Mg(2+). ATP is bound by residues 100–103, 160–161, and 184–186; these read EGAG, IS, and PLL.

This sequence belongs to the dethiobiotin synthetase family. In terms of assembly, homodimer. The cofactor is Mg(2+).

It is found in the cytoplasm. The catalysed reaction is (7R,8S)-7,8-diammoniononanoate + CO2 + ATP = (4R,5S)-dethiobiotin + ADP + phosphate + 3 H(+). It participates in cofactor biosynthesis; biotin biosynthesis; biotin from 7,8-diaminononanoate: step 1/2. Functionally, catalyzes a mechanistically unusual reaction, the ATP-dependent insertion of CO2 between the N7 and N8 nitrogen atoms of 7,8-diaminopelargonic acid (DAPA, also called 7,8-diammoniononanoate) to form a ureido ring. The sequence is that of ATP-dependent dethiobiotin synthetase BioD from Brucella abortus (strain S19).